The following is an 840-amino-acid chain: DNA mismatch repair protein MutS (840 aa).

601-608 contributes to the ATP binding site; that stretch reads GPNMSGKS.

The protein belongs to the DNA mismatch repair MutS family.

This protein is involved in the repair of mismatches in DNA. It is possible that it carries out the mismatch recognition step. This protein has a weak ATPase activity. This Lactococcus lactis subsp. cremoris (strain MG1363) protein is DNA mismatch repair protein MutS.